Here is a 165-residue protein sequence, read N- to C-terminus: Neurotrophin-3 (165 aa).

The signal sequence occupies residues 1 to 3; it reads IQS. The propeptide occupies 4–119; it reads TSMDQGSLSE…VLNQTSRRKR (116 aa). N-linked (GlcNAc...) asparagine glycosylation is present at asparagine 112.

It belongs to the NGF-beta family.

Its subcellular location is the secreted. Its function is as follows. Seems to promote the survival of visceral and proprioceptive sensory neurons. The sequence is that of Neurotrophin-3 (NTF3) from Aspidites melanocephalus (Black-headed python).